The primary structure comprises 204 residues: uncharacterized protein (204 aa).

Residues 47–108 (TDSSDDEGGA…EDSDEEGEGG (62 aa)) form a disordered region. Residues 49 to 106 (SSDDEGGASSGDEGEASSDDEGDASSDDEEEASSDGEGVVEDEETLDAEGEDSDEEGE) are compositionally biased toward acidic residues.

The protein resides in the mitochondrion. This is an uncharacterized protein from Paramecium tetraurelia.